We begin with the raw amino-acid sequence, 156 residues long: Lipoprotein signal peptidase (156 aa).

A run of 3 helical transmembrane segments spans residues 5-25 (FFVVYLIAALVIAVDQWTKQW), 63-83 (IEWQFWLFFAAAVTAVLAIIA), and 90-110 (SNPYLFTGFGLIMGGAIGNLI). Active-site residues include Asp-120 and Asp-138. A helical membrane pass occupies residues 133–153 (AFNVADMGICVGAFFVCLAVY).

The protein belongs to the peptidase A8 family.

The protein resides in the cell inner membrane. The enzyme catalyses Release of signal peptides from bacterial membrane prolipoproteins. Hydrolyzes -Xaa-Yaa-Zaa-|-(S,diacylglyceryl)Cys-, in which Xaa is hydrophobic (preferably Leu), and Yaa (Ala or Ser) and Zaa (Gly or Ala) have small, neutral side chains.. It participates in protein modification; lipoprotein biosynthesis (signal peptide cleavage). This protein specifically catalyzes the removal of signal peptides from prolipoproteins. This chain is Lipoprotein signal peptidase, found in Oleidesulfovibrio alaskensis (strain ATCC BAA-1058 / DSM 17464 / G20) (Desulfovibrio alaskensis).